Consider the following 360-residue polypeptide: Photosystem II protein D1 (360 aa).

3 helical membrane passes run Tyr29–Ser46, His118–Leu133, and Trp142–Ala156. His118 lines the chlorophyll a pocket. Tyr126 provides a ligand contact to pheophytin a. Residues Asp170 and Glu189 each contribute to the [CaMn4O5] cluster site. The helical transmembrane segment at Phe197 to Leu218 threads the bilayer. Residue His198 coordinates chlorophyll a. A quinone-binding positions include His215 and Ser264 to Phe265. Position 215 (His215) interacts with Fe cation. Fe cation is bound at residue His272. Residues Phe274–Met288 traverse the membrane as a helical segment. Positions 332, 333, 342, and 344 each coordinate [CaMn4O5] cluster. Residues Ser345–Ala360 constitute a propeptide that is removed on maturation.

It belongs to the reaction center PufL/M/PsbA/D family. As to quaternary structure, PSII is composed of 1 copy each of membrane proteins PsbA, PsbB, PsbC, PsbD, PsbE, PsbF, PsbH, PsbI, PsbJ, PsbK, PsbL, PsbM, PsbT, PsbX, PsbY, PsbZ, Psb30/Ycf12, at least 3 peripheral proteins of the oxygen-evolving complex and a large number of cofactors. It forms dimeric complexes. The D1/D2 heterodimer binds P680, chlorophylls that are the primary electron donor of PSII, and subsequent electron acceptors. It shares a non-heme iron and each subunit binds pheophytin, quinone, additional chlorophylls, carotenoids and lipids. D1 provides most of the ligands for the Mn4-Ca-O5 cluster of the oxygen-evolving complex (OEC). There is also a Cl(-1) ion associated with D1 and D2, which is required for oxygen evolution. The PSII complex binds additional chlorophylls, carotenoids and specific lipids. is required as a cofactor. Post-translationally, tyr-161 forms a radical intermediate that is referred to as redox-active TyrZ, YZ or Y-Z. C-terminally processed by CTPA; processing is essential to allow assembly of the oxygen-evolving complex and thus photosynthetic growth.

Its subcellular location is the plastid. It is found in the chloroplast thylakoid membrane. It catalyses the reaction 2 a plastoquinone + 4 hnu + 2 H2O = 2 a plastoquinol + O2. Photosystem II (PSII) is a light-driven water:plastoquinone oxidoreductase that uses light energy to abstract electrons from H(2)O, generating O(2) and a proton gradient subsequently used for ATP formation. It consists of a core antenna complex that captures photons, and an electron transfer chain that converts photonic excitation into a charge separation. The D1/D2 (PsbA/PsbD) reaction center heterodimer binds P680, the primary electron donor of PSII as well as several subsequent electron acceptors. In Thalassiosira pseudonana (Marine diatom), this protein is Photosystem II protein D1.